The primary structure comprises 188 residues: Photosystem I assembly protein Ycf4 (188 aa).

Transmembrane regions (helical) follow at residues 26–46 and 68–88; these read YFWA…GLSS and LVMG…WFVI.

The protein belongs to the Ycf4 family.

It localises to the cellular thylakoid membrane. Its function is as follows. Seems to be required for the assembly of the photosystem I complex. The protein is Photosystem I assembly protein Ycf4 of Synechococcus elongatus (strain ATCC 33912 / PCC 7942 / FACHB-805) (Anacystis nidulans R2).